A 150-amino-acid chain; its full sequence is D-aminoacyl-tRNA deacylase (150 aa).

Positions 136 to 137 (GP) match the Gly-cisPro motif, important for rejection of L-amino acids motif.

This sequence belongs to the DTD family. As to quaternary structure, homodimer.

It localises to the cytoplasm. It carries out the reaction glycyl-tRNA(Ala) + H2O = tRNA(Ala) + glycine + H(+). The enzyme catalyses a D-aminoacyl-tRNA + H2O = a tRNA + a D-alpha-amino acid + H(+). In terms of biological role, an aminoacyl-tRNA editing enzyme that deacylates mischarged D-aminoacyl-tRNAs. Also deacylates mischarged glycyl-tRNA(Ala), protecting cells against glycine mischarging by AlaRS. Acts via tRNA-based rather than protein-based catalysis; rejects L-amino acids rather than detecting D-amino acids in the active site. By recycling D-aminoacyl-tRNA to D-amino acids and free tRNA molecules, this enzyme counteracts the toxicity associated with the formation of D-aminoacyl-tRNA entities in vivo and helps enforce protein L-homochirality. In Staphylococcus aureus (strain MRSA252), this protein is D-aminoacyl-tRNA deacylase.